Reading from the N-terminus, the 477-residue chain is Bifunctional protein HldE (477 aa).

Residues 1–321 (MKILKSFTPR…EYEASLHKST (321 aa)) form a ribokinase region. ATP is bound at residue 198-201 (NKKE). D266 is a catalytic residue. Residues 348–477 (FTNGCFDILH…IQKIKGDLHV (130 aa)) are cytidylyltransferase.

It in the N-terminal section; belongs to the carbohydrate kinase PfkB family. This sequence in the C-terminal section; belongs to the cytidylyltransferase family. Homodimer.

The enzyme catalyses D-glycero-beta-D-manno-heptose 7-phosphate + ATP = D-glycero-beta-D-manno-heptose 1,7-bisphosphate + ADP + H(+). It carries out the reaction D-glycero-beta-D-manno-heptose 1-phosphate + ATP + H(+) = ADP-D-glycero-beta-D-manno-heptose + diphosphate. Its pathway is nucleotide-sugar biosynthesis; ADP-L-glycero-beta-D-manno-heptose biosynthesis; ADP-L-glycero-beta-D-manno-heptose from D-glycero-beta-D-manno-heptose 7-phosphate: step 1/4. It functions in the pathway nucleotide-sugar biosynthesis; ADP-L-glycero-beta-D-manno-heptose biosynthesis; ADP-L-glycero-beta-D-manno-heptose from D-glycero-beta-D-manno-heptose 7-phosphate: step 3/4. Catalyzes the phosphorylation of D-glycero-D-manno-heptose 7-phosphate at the C-1 position to selectively form D-glycero-beta-D-manno-heptose-1,7-bisphosphate. In terms of biological role, catalyzes the ADP transfer from ATP to D-glycero-beta-D-manno-heptose 1-phosphate, yielding ADP-D-glycero-beta-D-manno-heptose. This chain is Bifunctional protein HldE, found in Sulfurimonas denitrificans (strain ATCC 33889 / DSM 1251) (Thiomicrospira denitrificans (strain ATCC 33889 / DSM 1251)).